A 341-amino-acid chain; its full sequence is tRNA N6-adenosine threonylcarbamoyltransferase (341 aa).

Fe cation contacts are provided by His111 and His115. Substrate-binding positions include 134–138, Asp167, Gly180, and Asn276; that span reads LVSGG. Asp304 lines the Fe cation pocket.

The protein belongs to the KAE1 / TsaD family. It depends on Fe(2+) as a cofactor.

The protein localises to the cytoplasm. It catalyses the reaction L-threonylcarbamoyladenylate + adenosine(37) in tRNA = N(6)-L-threonylcarbamoyladenosine(37) in tRNA + AMP + H(+). Its function is as follows. Required for the formation of a threonylcarbamoyl group on adenosine at position 37 (t(6)A37) in tRNAs that read codons beginning with adenine. Is involved in the transfer of the threonylcarbamoyl moiety of threonylcarbamoyl-AMP (TC-AMP) to the N6 group of A37, together with TsaE and TsaB. TsaD likely plays a direct catalytic role in this reaction. This Pseudomonas entomophila (strain L48) protein is tRNA N6-adenosine threonylcarbamoyltransferase.